The chain runs to 633 residues: Chaperone protein dnaK2 (633 aa).

A Phosphothreonine; by autocatalysis modification is found at Thr197. Positions 600-633 (SNAASQAADGTSSESNNSTEGNDDVIDAEFTESK) are disordered. Residues 608–619 (DGTSSESNNSTE) show a composition bias toward low complexity. Residues 620–633 (GNDDVIDAEFTESK) show a composition bias toward acidic residues.

This sequence belongs to the heat shock protein 70 family.

Acts as a chaperone. The chain is Chaperone protein dnaK2 (dnaK2) from Prochlorococcus marinus (strain SARG / CCMP1375 / SS120).